The sequence spans 272 residues: tRNA pseudouridine synthase B (272 aa).

Residue Asp38 is the Nucleophile of the active site.

It belongs to the pseudouridine synthase TruB family. Type 1 subfamily.

It carries out the reaction uridine(55) in tRNA = pseudouridine(55) in tRNA. Functionally, responsible for synthesis of pseudouridine from uracil-55 in the psi GC loop of transfer RNAs. The sequence is that of tRNA pseudouridine synthase B from Campylobacter jejuni subsp. jejuni serotype O:6 (strain 81116 / NCTC 11828).